We begin with the raw amino-acid sequence, 424 residues long: Hemagglutinin-esterase (424 aa).

Residues 1–16 form the signal peptide; sequence MFLLPRFVLVSCIIGS. Residues 7–127 form an esterase domain 1 region; that stretch reads FVLVSCIIGS…SNDIWMQNKG (121 aa). Over 17–392 the chain is Virion surface; sequence LGFDNPPTNV…PICVYDPLPL (376 aa). S40 (nucleophile) is an active-site residue. A disulfide bridge links C44 with C65. N54, N89, N153, N236, and N301 each carry an N-linked (GlcNAc...) asparagine; by host glycan. Cystine bridges form between C113–C162, C197–C276, and C205–C249. The segment at 128–266 is receptor binding; sequence LFYTQVYKNM…GNYLAISNEL (139 aa). The interval 267–379 is esterase domain 2; it reads LLTVPTKAIC…RCPTAADINN (113 aa). An intrachain disulfide couples C307 to C312. A glycan (N-linked (GlcNAc...) asparagine; by host) is linked at N316. Active-site charge relay system residues include D326 and H329. C347 and C371 are disulfide-bonded. Residue N358 is glycosylated (N-linked (GlcNAc...) asparagine; by host). The helical transmembrane segment at 393–413 threads the bilayer; that stretch reads ILLGILLGVAVIIIVVLLLYF. Over 414–424 the chain is Intravirion; sequence MVDNGTRLHDA. The N-linked (GlcNAc...) asparagine; by host glycan is linked to N417.

This sequence belongs to the influenza type C/coronaviruses hemagglutinin-esterase family. In terms of assembly, homodimer; disulfide-linked. Forms a complex with the M protein in the pre-Golgi. Associates then with S-M complex to form a ternary complex S-M-HE. Post-translationally, N-glycosylated in the host RER.

The protein localises to the virion membrane. Its subcellular location is the host cell membrane. The enzyme catalyses N-acetyl-9-O-acetylneuraminate + H2O = N-acetylneuraminate + acetate + H(+). The catalysed reaction is N-acetyl-4-O-acetylneuraminate + H2O = N-acetylneuraminate + acetate + H(+). In terms of biological role, structural protein that makes short spikes at the surface of the virus. Contains receptor binding and receptor-destroying activities. Mediates de-O-acetylation of N-acetyl-4-O-acetylneuraminic acid, which is probably the receptor determinant recognized by the virus on the surface of erythrocytes and susceptible cells. This receptor-destroying activity is important for virus release as it probably helps preventing self-aggregation and ensures the efficient spread of the progeny virus from cell to cell. May serve as a secondary viral attachment protein for initiating infection, the spike protein being the major one. May become a target for both the humoral and the cellular branches of the immune system. The polypeptide is Hemagglutinin-esterase (Bovine coronavirus (strain LY-138) (BCoV)).